The following is a 400-amino-acid chain: 1-deoxy-D-xylulose 5-phosphate reductoisomerase (400 aa).

NADPH contacts are provided by threonine 17, glycine 18, serine 19, isoleucine 20, and asparagine 131. A 1-deoxy-D-xylulose 5-phosphate-binding site is contributed by lysine 132. Position 133 (glutamate 133) interacts with NADPH. Aspartate 157 serves as a coordination point for Mn(2+). 1-deoxy-D-xylulose 5-phosphate contacts are provided by serine 158, glutamate 159, serine 188, and histidine 211. Glutamate 159 contacts Mn(2+). Glycine 217 serves as a coordination point for NADPH. 4 residues coordinate 1-deoxy-D-xylulose 5-phosphate: serine 224, asparagine 229, lysine 230, and glutamate 233. Residue glutamate 233 coordinates Mn(2+).

Belongs to the DXR family. Mg(2+) serves as cofactor. Mn(2+) is required as a cofactor.

The enzyme catalyses 2-C-methyl-D-erythritol 4-phosphate + NADP(+) = 1-deoxy-D-xylulose 5-phosphate + NADPH + H(+). It functions in the pathway isoprenoid biosynthesis; isopentenyl diphosphate biosynthesis via DXP pathway; isopentenyl diphosphate from 1-deoxy-D-xylulose 5-phosphate: step 1/6. Functionally, catalyzes the NADPH-dependent rearrangement and reduction of 1-deoxy-D-xylulose-5-phosphate (DXP) to 2-C-methyl-D-erythritol 4-phosphate (MEP). The chain is 1-deoxy-D-xylulose 5-phosphate reductoisomerase from Pseudomonas putida (strain ATCC 700007 / DSM 6899 / JCM 31910 / BCRC 17059 / LMG 24140 / F1).